The sequence spans 382 residues: D-galactonate dehydratase (382 aa).

Mg(2+) is bound at residue D183. H185 functions as the Proton donor in the catalytic mechanism. The Mg(2+) site is built by E209 and E235. H285 serves as the catalytic Proton acceptor.

It belongs to the mandelate racemase/muconate lactonizing enzyme family. GalD subfamily. Mg(2+) serves as cofactor.

The catalysed reaction is D-galactonate = 2-dehydro-3-deoxy-D-galactonate + H2O. It functions in the pathway carbohydrate acid metabolism; D-galactonate degradation; D-glyceraldehyde 3-phosphate and pyruvate from D-galactonate: step 1/3. Its function is as follows. Catalyzes the dehydration of D-galactonate to 2-keto-3-deoxy-D-galactonate. In Variovorax paradoxus (strain S110), this protein is D-galactonate dehydratase.